Reading from the N-terminus, the 318-residue chain is uncharacterized protein (318 aa).

This sequence belongs to the NAD(P)-dependent epimerase/dehydratase family.

This is an uncharacterized protein from Staphylococcus haemolyticus (strain JCSC1435).